The chain runs to 239 residues: Protein UL20 homolog (239 aa).

Transmembrane regions (helical) follow at residues 65–81 (PSFSAHVVLFAISALVI), 140–156 (FVIGCMALGRTVAFMVV), and 189–208 (LMPLISVRSAVCLVIISTAV).

The protein belongs to the alphaherpesvirinae UL20 family. In terms of assembly, interacts with gK (via N-terminus); this interaction plays a role in the coordinate transport of UL20 and gK to the trans-Golgi network (TGN), and is required for their cell surface expression. Interacts with gB.

It localises to the virion. It is found in the host cell membrane. The protein resides in the host endosome membrane. The protein localises to the host Golgi apparatus membrane. Its subcellular location is the host nucleus membrane. In terms of biological role, plays an essential role in egress of virus particles from the nucleus, cytoplasmic envelopment and virus-induced cell fusion. Forms a functional protein complex with gK and this interaction is absolutely essential for their coordinate intracellular transport, gK glycosylation, expression on host cell surface, and function. Together, they modulate gB-mediated virus-induced cell fusion and virion egress and therefore actively participate in these processes. This Equus caballus (Horse) protein is Protein UL20 homolog.